The primary structure comprises 236 residues: uncharacterized protein (236 aa).

Disordered stretches follow at residues Met1 to Ser48, Val67 to Arg122, and Lys134 to Thr192. Positions Arg85–Cys99 are enriched in basic residues. Over residues Pro180–Pro189 the composition is skewed to pro residues.

This is an uncharacterized protein from Encephalitozoon cuniculi (strain GB-M1) (Microsporidian parasite).